The sequence spans 71 residues: uncharacterized protein (71 aa).

The segment covering 1–16 (MAKSQAKKKRGHRLRN) has biased composition (basic residues). 2 disordered regions span residues 1-39 (MAKS…RMTK) and 51-71 (KNPY…QKAA). A compositionally biased stretch (polar residues) spans 25–35 (RGSTPSFSTHG). Residues 51-64 (KNPYDHTAVDDKDF) are compositionally biased toward basic and acidic residues.

This is an uncharacterized protein from Bacillus subtilis (strain 168).